A 159-amino-acid chain; its full sequence is Putative 4-hydroxy-4-methyl-2-oxoglutarate aldolase (159 aa).

Substrate contacts are provided by residues 78-81 and R100; that span reads GDVI. A divalent metal cation is bound at residue D101.

Belongs to the class II aldolase/RraA-like family. Homotrimer. A divalent metal cation serves as cofactor.

It carries out the reaction 4-hydroxy-4-methyl-2-oxoglutarate = 2 pyruvate. It catalyses the reaction oxaloacetate + H(+) = pyruvate + CO2. Its function is as follows. Catalyzes the aldol cleavage of 4-hydroxy-4-methyl-2-oxoglutarate (HMG) into 2 molecules of pyruvate. Also contains a secondary oxaloacetate (OAA) decarboxylase activity due to the common pyruvate enolate transition state formed following C-C bond cleavage in the retro-aldol and decarboxylation reactions. In Mycobacterium sp. (strain JLS), this protein is Putative 4-hydroxy-4-methyl-2-oxoglutarate aldolase.